The following is a 274-amino-acid chain: Diaminopimelate epimerase (274 aa).

Substrate is bound by residues Asn-11, Gln-44, and Asn-64. Cys-73 serves as the catalytic Proton donor. Residues 74–75 (GN), Asn-157, Asn-190, and 208–209 (ER) contribute to the substrate site. Cys-217 serves as the catalytic Proton acceptor. Position 218 to 219 (218 to 219 (GS)) interacts with substrate.

It belongs to the diaminopimelate epimerase family. In terms of assembly, homodimer.

It is found in the cytoplasm. The enzyme catalyses (2S,6S)-2,6-diaminopimelate = meso-2,6-diaminopimelate. It functions in the pathway amino-acid biosynthesis; L-lysine biosynthesis via DAP pathway; DL-2,6-diaminopimelate from LL-2,6-diaminopimelate: step 1/1. Functionally, catalyzes the stereoinversion of LL-2,6-diaminopimelate (L,L-DAP) to meso-diaminopimelate (meso-DAP), a precursor of L-lysine and an essential component of the bacterial peptidoglycan. This is Diaminopimelate epimerase from Serratia proteamaculans (strain 568).